The chain runs to 57 residues: Small ribosomal subunit protein bS21 (57 aa).

The disordered stretch occupies residues E31–F57. A compositionally biased stretch (basic residues) spans R33 to F57.

The protein belongs to the bacterial ribosomal protein bS21 family.

The protein is Small ribosomal subunit protein bS21 (rpsU) of Halalkalibacterium halodurans (strain ATCC BAA-125 / DSM 18197 / FERM 7344 / JCM 9153 / C-125) (Bacillus halodurans).